The following is a 346-amino-acid chain: 3-dehydroquinate synthase (346 aa).

NAD(+)-binding positions include 61-66 (DGEAYK), 95-99 (GVIGD), 119-120 (TT), Lys132, and Lys141. The Zn(2+) site is built by Glu174, His233, and His250.

This sequence belongs to the sugar phosphate cyclases superfamily. Dehydroquinate synthase family. It depends on NAD(+) as a cofactor. Co(2+) serves as cofactor. Requires Zn(2+) as cofactor.

It is found in the cytoplasm. It carries out the reaction 7-phospho-2-dehydro-3-deoxy-D-arabino-heptonate = 3-dehydroquinate + phosphate. The protein operates within metabolic intermediate biosynthesis; chorismate biosynthesis; chorismate from D-erythrose 4-phosphate and phosphoenolpyruvate: step 2/7. Functionally, catalyzes the conversion of 3-deoxy-D-arabino-heptulosonate 7-phosphate (DAHP) to dehydroquinate (DHQ). This is 3-dehydroquinate synthase from Wolinella succinogenes (strain ATCC 29543 / DSM 1740 / CCUG 13145 / JCM 31913 / LMG 7466 / NCTC 11488 / FDC 602W) (Vibrio succinogenes).